Here is a 422-residue protein sequence, read N- to C-terminus: Serine protease inhibitor A3A (422 aa).

Positions 1–17 (MAFIAALGLLMVGICPA) are cleaved as a signal peptide. Residues Asn218, Asn230, and Asn271 are each glycosylated (N-linked (GlcNAc...) asparagine). An RCL region spans residues 369–394 (HTEADVITIARYNFQSAKIKAKIVKV).

Belongs to the serpin family.

It localises to the secreted. The chain is Serine protease inhibitor A3A (Serpina3a) from Mus musculus (Mouse).